Reading from the N-terminus, the 215-residue chain is NADH-quinone oxidoreductase subunit C (215 aa).

It belongs to the complex I 30 kDa subunit family. NDH-1 is composed of 14 different subunits. Subunits NuoB, C, D, E, F, and G constitute the peripheral sector of the complex.

The protein localises to the cell inner membrane. The catalysed reaction is a quinone + NADH + 5 H(+)(in) = a quinol + NAD(+) + 4 H(+)(out). NDH-1 shuttles electrons from NADH, via FMN and iron-sulfur (Fe-S) centers, to quinones in the respiratory chain. The immediate electron acceptor for the enzyme in this species is believed to be ubiquinone. Couples the redox reaction to proton translocation (for every two electrons transferred, four hydrogen ions are translocated across the cytoplasmic membrane), and thus conserves the redox energy in a proton gradient. The polypeptide is NADH-quinone oxidoreductase subunit C (Methylobacterium sp. (strain 4-46)).